The following is a 508-amino-acid chain: 2,3-bisphosphoglycerate-independent phosphoglycerate mutase (508 aa).

Asp-14 and Ser-64 together coordinate Mn(2+). The active-site Phosphoserine intermediate is the Ser-64. Substrate contacts are provided by residues His-125, 155 to 156 (RD), Arg-187, Arg-193, 259 to 262 (RADR), and Lys-332. Mn(2+) is bound by residues Asp-399, His-403, Asp-440, His-441, and His-459.

Belongs to the BPG-independent phosphoglycerate mutase family. Monomer. Requires Mn(2+) as cofactor.

It catalyses the reaction (2R)-2-phosphoglycerate = (2R)-3-phosphoglycerate. It functions in the pathway carbohydrate degradation; glycolysis; pyruvate from D-glyceraldehyde 3-phosphate: step 3/5. Catalyzes the interconversion of 2-phosphoglycerate and 3-phosphoglycerate. In Pseudomonas fluorescens (strain Pf0-1), this protein is 2,3-bisphosphoglycerate-independent phosphoglycerate mutase.